The chain runs to 261 residues: Putative outer membrane protein CT_371 (261 aa).

Residues 1–18 form the signal peptide; the sequence is MRLCFILFLLLSPLISEA.

Its subcellular location is the cell outer membrane. The polypeptide is Putative outer membrane protein CT_371 (Chlamydia trachomatis serovar D (strain ATCC VR-885 / DSM 19411 / UW-3/Cx)).